A 379-amino-acid polypeptide reads, in one-letter code: Alcohol dehydrogenase 1 (379 aa).

Positions 47, 49, 69, 99, 102, 105, 113, and 177 each coordinate Zn(2+). An alcohol is bound by residues threonine 49 and histidine 69. Threonine 49 is a binding site for NAD(+). Residues 202–207 (GLGAVG), aspartate 226, arginine 231, threonine 272, valine 295, 295–297 (VGV), phenylalanine 322, and arginine 372 contribute to the NAD(+) site.

It belongs to the zinc-containing alcohol dehydrogenase family. Homodimer. Zn(2+) is required as a cofactor.

It localises to the cytoplasm. The catalysed reaction is a primary alcohol + NAD(+) = an aldehyde + NADH + H(+). The enzyme catalyses a secondary alcohol + NAD(+) = a ketone + NADH + H(+). The protein is Alcohol dehydrogenase 1 (ADH1) of Oryza sativa subsp. indica (Rice).